Here is a 321-residue protein sequence, read N- to C-terminus: Basic peroxidase (321 aa).

Residues 1 to 30 (MSYHKSSGTTLMVPLFMLLISVNYFMSCNA) form the signal peptide. At Q31 the chain carries Pyrrolidone carboxylic acid. Disulfide bonds link C41/C117, C74/C79, C123/C317, and C202/C228. H72 (proton acceptor) is an active-site residue. Ca(2+)-binding residues include D73, V76, G78, D80, and S82. P165 serves as a coordination point for substrate. H195 provides a ligand contact to heme b. T196 is a Ca(2+) binding site. N-linked (GlcNAc...) asparagine glycosylation is found at N211 and N221. D241, T244, and D249 together coordinate Ca(2+).

The protein belongs to the peroxidase family. Classical plant (class III) peroxidase subfamily. It depends on heme b as a cofactor. Ca(2+) serves as cofactor. N-glycosylated. In terms of tissue distribution, expressed in tracheary elements, roots, young and old hypocotyls, and stems in the partially glycosylated form and in roots and young hypocotyls in the fully glycosylated form. None of the isoforms is significantly expressed in leaves or cotyledons.

It is found in the secreted. The catalysed reaction is 2 a phenolic donor + H2O2 = 2 a phenolic radical donor + 2 H2O. Removal of H(2)O(2), oxidation of toxic reductants, biosynthesis and degradation of lignin, suberization, auxin catabolism, response to environmental stresses such as wounding, pathogen attack and oxidative stress. These functions might be dependent on each isozyme/isoform in each plant tissue. Involved in the synthesis of highly polymerized lignins. The chain is Basic peroxidase (POD3) from Zinnia elegans (Garden zinnia).